The chain runs to 332 residues: Phosphate acyltransferase (332 aa).

This sequence belongs to the PlsX family. Homodimer. Probably interacts with PlsY.

Its subcellular location is the cytoplasm. The enzyme catalyses a fatty acyl-[ACP] + phosphate = an acyl phosphate + holo-[ACP]. Its pathway is lipid metabolism; phospholipid metabolism. In terms of biological role, catalyzes the reversible formation of acyl-phosphate (acyl-PO(4)) from acyl-[acyl-carrier-protein] (acyl-ACP). This enzyme utilizes acyl-ACP as fatty acyl donor, but not acyl-CoA. The polypeptide is Phosphate acyltransferase (Thermoanaerobacter pseudethanolicus (strain ATCC 33223 / 39E) (Clostridium thermohydrosulfuricum)).